Reading from the N-terminus, the 161-residue chain is MKLNELRDNEGAARKKKRVARGPGSGKGKTAGRGIKGQKSRSGVALNGYEGGQMPLYRRLPKRGFTKPNRKEYAVVNLGLIQKFVDAGKLDASQPIDENAIVAAGVTSHKRDGIRVLAKGEITAKLALTVSGASKSAVEAIEKAGGSITLTAPAAAAASAE.

The span at 1–13 shows a compositional bias: basic and acidic residues; that stretch reads MKLNELRDNEGAA. The interval 1 to 51 is disordered; the sequence is MKLNELRDNEGAARKKKRVARGPGSGKGKTAGRGIKGQKSRSGVALNGYEG. Residues 23 to 35 show a composition bias toward gly residues; that stretch reads PGSGKGKTAGRGI.

Belongs to the universal ribosomal protein uL15 family. As to quaternary structure, part of the 50S ribosomal subunit.

Functionally, binds to the 23S rRNA. This Cereibacter sphaeroides (strain ATCC 17023 / DSM 158 / JCM 6121 / CCUG 31486 / LMG 2827 / NBRC 12203 / NCIMB 8253 / ATH 2.4.1.) (Rhodobacter sphaeroides) protein is Large ribosomal subunit protein uL15.